We begin with the raw amino-acid sequence, 154 residues long: Large ribosomal subunit protein uL13 (154 aa).

It belongs to the universal ribosomal protein uL13 family. As to quaternary structure, part of the 50S ribosomal subunit.

Functionally, this protein is one of the early assembly proteins of the 50S ribosomal subunit, although it is not seen to bind rRNA by itself. It is important during the early stages of 50S assembly. In Cereibacter sphaeroides (strain ATCC 17025 / ATH 2.4.3) (Rhodobacter sphaeroides), this protein is Large ribosomal subunit protein uL13.